We begin with the raw amino-acid sequence, 663 residues long: Nuclear receptor-binding protein homolog (663 aa).

Residues 1–14 (MSNSQANAGSSGSA) are compositionally biased toward low complexity. The disordered stretch occupies residues 1 to 112 (MSNSQANAGS…SEDESEILEE (112 aa)). The segment covering 19–46 (LNPSGSATLVPNLTTTNASSQATPASTI) has biased composition (polar residues). 2 stretches are compositionally biased toward low complexity: residues 47–57 (PQQQQPQQSQP) and 81–94 (VVVA…NLDS). Acidic residues predominate over residues 101–111 (DDSEDESEILE). The Protein kinase domain maps to 122–392 (REEVDQRDVP…ANDLLFHPLL (271 aa)). 2 disordered regions span residues 481–505 (PNFR…EPVD) and 638–663 (YVPQ…TTSN). Ser-489, Ser-495, and Ser-498 each carry phosphoserine. A Phosphothreonine modification is found at Thr-500. Residues 641 to 652 (QDQQQYQQQQQE) show a composition bias toward low complexity.

It belongs to the protein kinase superfamily. Ser/Thr protein kinase family.

The protein localises to the cytoplasm. It localises to the cell cortex. Its function is as follows. May play a role in subcellular trafficking between the endoplasmic reticulum and Golgi apparatus. The polypeptide is Nuclear receptor-binding protein homolog (Drosophila pseudoobscura pseudoobscura (Fruit fly)).